A 113-amino-acid chain; its full sequence is Hemerythrin (113 aa).

Residues His-25, His-54, Glu-58, His-73, His-77, His-101, and Asp-106 each contribute to the Fe cation site.

Belongs to the hemerythrin family. Homotrimer.

Functionally, hemerythrin is a respiratory protein in blood cells of certain marine worms. The oxygen-binding site in each chain contains two iron atoms. The protein is Hemerythrin of Siphonosoma cumanense (Sipunculan worm).